The sequence spans 96 residues: Protein RnfH (96 aa).

This sequence belongs to the UPF0125 (RnfH) family.

The chain is Protein RnfH from Escherichia coli O17:K52:H18 (strain UMN026 / ExPEC).